A 362-amino-acid polypeptide reads, in one-letter code: DNA replication and repair protein RecF (362 aa).

ATP is bound at residue 30-37; that stretch reads GDNAQGKT.

Belongs to the RecF family.

The protein localises to the cytoplasm. In terms of biological role, the RecF protein is involved in DNA metabolism; it is required for DNA replication and normal SOS inducibility. RecF binds preferentially to single-stranded, linear DNA. It also seems to bind ATP. The protein is DNA replication and repair protein RecF of Agathobacter rectalis (strain ATCC 33656 / DSM 3377 / JCM 17463 / KCTC 5835 / VPI 0990) (Eubacterium rectale).